Consider the following 883-residue polypeptide: Copper-transporting ATPase PAA2, chloroplastic (883 aa).

The N-terminal 65 residues, 1–65 (MASNLLRFPL…TQSFESTESS (65 aa)), are a transit peptide targeting the chloroplast. The region spanning 76–146 (TPILLDVSGM…RLTESGFEAK (71 aa)) is the HMA domain. Cu cation contacts are provided by cysteine 87 and cysteine 90. 6 consecutive transmembrane segments (helical) span residues 179 to 199 (VAFAWTLVALCCGSHTSHILH), 209 to 229 (GIWDLLHNSYVKGGLAVGALL), 250 to 270 (MNSLVGLGSMAAFSISLISLV), 274 to 294 (LEWDASFFDEPVMLLGFVLLG), 445 to 465 (AIAGPFVYTIMSLSAMTFAFW), and 499 to 519 (VLVVSCPCALGLATPTAILIG). Aspartate 548 functions as the 4-aspartylphosphate intermediate in the catalytic mechanism. ATP is bound at residue 761 to 768 (GDGINDAP). Positions 762 and 766 each coordinate Mg(2+). Helical transmembrane passes span 822–842 (LAWAIAYNVISIPIAAGVLLP) and 846–866 (FAMTPSLSGGLMALSSIFVVS).

This sequence belongs to the cation transport ATPase (P-type) (TC 3.A.3) family. Type IB subfamily. Expressed in the shoots only and not in the roots.

The protein localises to the plastid. It localises to the chloroplast thylakoid membrane. It catalyses the reaction Cu(2+)(in) + ATP + H2O = Cu(2+)(out) + ADP + phosphate + H(+). Functionally, mediates copper transfer across the chloroplast thylakoid membrane. Required for copper delivery into the thylakoids lumen, which is essential for the function of copper proteins. This Arabidopsis thaliana (Mouse-ear cress) protein is Copper-transporting ATPase PAA2, chloroplastic (PAA2).